Here is a 251-residue protein sequence, read N- to C-terminus: Small ribosomal subunit protein uS2 (251 aa).

The protein belongs to the universal ribosomal protein uS2 family.

This chain is Small ribosomal subunit protein uS2, found in Chlorobium chlorochromatii (strain CaD3).